A 376-amino-acid chain; its full sequence is MQCALYDAGRCRSCQWITQSVNEQLSAKTADLHRLLAGLPVEQWCAPIGGPEQHFRNKAKMVVSGSVEKPLFGMLHRDGTPVDLCGCPLYPASFDPVFSALKPFIARAGLTPYNVARKRGELKYLLLTESQFDGGMMLRFVLRSETKLTQLRAALPWLRAQLPQLRVITANIQPVHMAIMEGETEIYLTDQQALAERFNDVPLWIRPQSFFQTNPTVASRLYATARDWVGQLPVRHMWDLFCGVGGFGLHCATPQMQLTGIEIAPEAIACAKQSAAELGLTRLHFQALDSTQFATAQGETPDLVLVNPPRRGIGKPLCDYLAQMAPRFIIYSSCNAQTMAQDIRHLPNYRIQRVQLFDMFPHTAHYEVLALLRRSI.

[4Fe-4S] cluster is bound by residues C3, C11, C14, and C87. Positions 212, 241, 262, and 307 each coordinate S-adenosyl-L-methionine. C334 (nucleophile) is an active-site residue.

It belongs to the class I-like SAM-binding methyltransferase superfamily. RNA M5U methyltransferase family. RlmC subfamily.

It catalyses the reaction uridine(747) in 23S rRNA + S-adenosyl-L-methionine = 5-methyluridine(747) in 23S rRNA + S-adenosyl-L-homocysteine + H(+). Functionally, catalyzes the formation of 5-methyl-uridine at position 747 (m5U747) in 23S rRNA. The sequence is that of 23S rRNA (uracil(747)-C(5))-methyltransferase RlmC from Salmonella typhimurium (strain LT2 / SGSC1412 / ATCC 700720).